Reading from the N-terminus, the 346-residue chain is UPF0053 protein sll1254 (346 aa).

The next 4 helical transmembrane spans lie at 1 to 21 (MLEI…CSCA), 58 to 78 (IGTI…TIGA), 87 to 107 (AWMG…GEII), and 121 to 141 (LLIA…VWLI). The 179-residue stretch at 1–179 (MLEIVAAIFI…YKEGVIEGDE (179 aa)) folds into the CNNM transmembrane domain. 2 CBS domains span residues 198 to 259 (MTPR…GYKT) and 263 to 320 (LARP…IVDE).

The protein belongs to the UPF0053 family.

Its subcellular location is the cell membrane. The chain is UPF0053 protein sll1254 from Synechocystis sp. (strain ATCC 27184 / PCC 6803 / Kazusa).